Reading from the N-terminus, the 455-residue chain is Phosphomethylpyrimidine synthase (455 aa).

Substrate-binding positions include Asn80, Met109, Tyr139, His175, 195–197 (SRG), 236–239 (DSLR), and Glu275. His279 lines the Zn(2+) pocket. Tyr302 lines the substrate pocket. His343 contacts Zn(2+). [4Fe-4S] cluster-binding residues include Cys423, Cys426, and Cys431.

This sequence belongs to the ThiC family. The cofactor is [4Fe-4S] cluster.

It carries out the reaction 5-amino-1-(5-phospho-beta-D-ribosyl)imidazole + S-adenosyl-L-methionine = 4-amino-2-methyl-5-(phosphooxymethyl)pyrimidine + CO + 5'-deoxyadenosine + formate + L-methionine + 3 H(+). The protein operates within cofactor biosynthesis; thiamine diphosphate biosynthesis. Functionally, catalyzes the synthesis of the hydroxymethylpyrimidine phosphate (HMP-P) moiety of thiamine from aminoimidazole ribotide (AIR) in a radical S-adenosyl-L-methionine (SAM)-dependent reaction. The chain is Phosphomethylpyrimidine synthase from Synechococcus sp. (strain JA-2-3B'a(2-13)) (Cyanobacteria bacterium Yellowstone B-Prime).